We begin with the raw amino-acid sequence, 425 residues long: Enolase (425 aa).

(2R)-2-phosphoglycerate is bound at residue glutamine 162. The active-site Proton donor is glutamate 204. Aspartate 241, glutamate 282, and aspartate 309 together coordinate Mg(2+). Positions 334, 363, 364, and 385 each coordinate (2R)-2-phosphoglycerate. Lysine 334 serves as the catalytic Proton acceptor.

This sequence belongs to the enolase family. The cofactor is Mg(2+).

It localises to the cytoplasm. The protein localises to the secreted. The protein resides in the cell surface. The catalysed reaction is (2R)-2-phosphoglycerate = phosphoenolpyruvate + H2O. Its pathway is carbohydrate degradation; glycolysis; pyruvate from D-glyceraldehyde 3-phosphate: step 4/5. Its function is as follows. Catalyzes the reversible conversion of 2-phosphoglycerate (2-PG) into phosphoenolpyruvate (PEP). It is essential for the degradation of carbohydrates via glycolysis. The polypeptide is Enolase (Corynebacterium glutamicum (strain R)).